We begin with the raw amino-acid sequence, 202 residues long: Nucleoside triphosphate pyrophosphatase (202 aa).

Asp79 (proton acceptor) is an active-site residue.

It belongs to the Maf family. It depends on a divalent metal cation as a cofactor.

It localises to the cytoplasm. It carries out the reaction a ribonucleoside 5'-triphosphate + H2O = a ribonucleoside 5'-phosphate + diphosphate + H(+). The enzyme catalyses a 2'-deoxyribonucleoside 5'-triphosphate + H2O = a 2'-deoxyribonucleoside 5'-phosphate + diphosphate + H(+). Functionally, nucleoside triphosphate pyrophosphatase. May have a dual role in cell division arrest and in preventing the incorporation of modified nucleotides into cellular nucleic acids. The polypeptide is Nucleoside triphosphate pyrophosphatase (Bradyrhizobium diazoefficiens (strain JCM 10833 / BCRC 13528 / IAM 13628 / NBRC 14792 / USDA 110)).